The chain runs to 132 residues: Agouti-signaling protein (132 aa).

The first 22 residues, 1-22, serve as a signal peptide directing secretion; that stretch reads MDVTRLLLATLLVFLCFFTAYS. Asn39 carries an N-linked (GlcNAc...) asparagine glycan. Residues 62-88 form a disordered region; sequence ISRKEAEKKRSSKKEASMKKVARPRTP. Residues 63-79 show a composition bias toward basic and acidic residues; the sequence is SRKEAEKKRSSKKEASM. Cystine bridges form between Cys93-Cys108, Cys100-Cys114, Cys107-Cys125, Cys111-Cys132, and Cys116-Cys123. Positions 93–132 constitute an Agouti domain; sequence CVATRDSCKPPAPACCDPCASCQCRFFRSACSCRVLSLNC.

It is found in the secreted. Its function is as follows. Involved in the regulation of melanogenesis. The binding of ASP to MC1R precludes alpha-MSH initiated signaling and thus blocks production of cAMP, leading to a down-regulation of eumelanogenesis (brown/black pigment) and thus increasing synthesis of pheomelanin (yellow/red pigment). In Chlorocebus aethiops (Green monkey), this protein is Agouti-signaling protein (ASIP).